The chain runs to 258 residues: Imidazole glycerol phosphate synthase subunit HisF (258 aa).

Residues D11 and D130 contribute to the active site.

The protein belongs to the HisA/HisF family. In terms of assembly, heterodimer of HisH and HisF.

It localises to the cytoplasm. The catalysed reaction is 5-[(5-phospho-1-deoxy-D-ribulos-1-ylimino)methylamino]-1-(5-phospho-beta-D-ribosyl)imidazole-4-carboxamide + L-glutamine = D-erythro-1-(imidazol-4-yl)glycerol 3-phosphate + 5-amino-1-(5-phospho-beta-D-ribosyl)imidazole-4-carboxamide + L-glutamate + H(+). It participates in amino-acid biosynthesis; L-histidine biosynthesis; L-histidine from 5-phospho-alpha-D-ribose 1-diphosphate: step 5/9. Functionally, IGPS catalyzes the conversion of PRFAR and glutamine to IGP, AICAR and glutamate. The HisF subunit catalyzes the cyclization activity that produces IGP and AICAR from PRFAR using the ammonia provided by the HisH subunit. The sequence is that of Imidazole glycerol phosphate synthase subunit HisF from Shigella boydii serotype 18 (strain CDC 3083-94 / BS512).